A 319-amino-acid chain; its full sequence is uncharacterized protein (319 aa).

A compositionally biased stretch (low complexity) spans 268–312 (SSVVAVTHPPSTTSTTTSVSETLSSFIAPSDLSSQPSPSSHPSSP). The interval 268–319 (SSVVAVTHPPSTTSTTTSVSETLSSFIAPSDLSSQPSPSSHPSSPFGNHNEF) is disordered.

This is an uncharacterized protein from Lepidoptera (butterflies and moths).